The primary structure comprises 106 residues: UPF0145 protein CTC_01500 (106 aa).

Belongs to the UPF0145 family.

The protein is UPF0145 protein CTC_01500 of Clostridium tetani (strain Massachusetts / E88).